We begin with the raw amino-acid sequence, 1088 residues long: DNA ligase 4 (1088 aa).

2 disordered regions span residues methionine 1–aspartate 56 and threonine 73–threonine 117. 2 stretches are compositionally biased toward low complexity: residues aspartate 25–lysine 53 and threonine 73–threonine 90. A compositionally biased stretch (acidic residues) spans aspartate 95–serine 105. Residues glutamate 414, lysine 416, arginine 421, glutamate 467, phenylalanine 514, glutamate 574, lysine 579, lysine 596, and lysine 598 each contribute to the ATP site. Catalysis depends on lysine 416, which acts as the N6-AMP-lysine intermediate. Residue glutamate 467 coordinates Mg(2+). Glutamate 574 is a Mg(2+) binding site. 2 consecutive BRCT domains span residues proline 827–methionine 917 and cysteine 984–aspartate 1088.

The protein belongs to the ATP-dependent DNA ligase family. It depends on Mg(2+) as a cofactor.

Its subcellular location is the nucleus. The enzyme catalyses ATP + (deoxyribonucleotide)n-3'-hydroxyl + 5'-phospho-(deoxyribonucleotide)m = (deoxyribonucleotide)n+m + AMP + diphosphate.. DNA ligase involved in DNA non-homologous end joining (NHEJ); required for double-strand break (DSB) repair. The chain is DNA ligase 4 (lig4) from Dictyostelium discoideum (Social amoeba).